The primary structure comprises 184 residues: NADH-quinone oxidoreductase subunit B (184 aa).

Positions 37, 38, 103, and 132 each coordinate [4Fe-4S] cluster.

Belongs to the complex I 20 kDa subunit family. NDH-1 is composed of 14 different subunits. Subunits NuoB, C, D, E, F, and G constitute the peripheral sector of the complex. The cofactor is [4Fe-4S] cluster.

The protein resides in the cell membrane. It carries out the reaction a quinone + NADH + 5 H(+)(in) = a quinol + NAD(+) + 4 H(+)(out). Its function is as follows. NDH-1 shuttles electrons from NADH, via FMN and iron-sulfur (Fe-S) centers, to quinones in the respiratory chain. The immediate electron acceptor for the enzyme in this species is believed to be a menaquinone. Couples the redox reaction to proton translocation (for every two electrons transferred, four hydrogen ions are translocated across the cytoplasmic membrane), and thus conserves the redox energy in a proton gradient. This is NADH-quinone oxidoreductase subunit B from Rhodococcus jostii (strain RHA1).